Reading from the N-terminus, the 411-residue chain is Tyrosine--tRNA ligase (411 aa).

Residue Tyr33 participates in L-tyrosine binding. Residues 38–47 (PTADSLHLGN) carry the 'HIGH' region motif. L-tyrosine-binding residues include Tyr160 and Gln164. Positions 222 to 226 (KFGKS) match the 'KMSKS' region motif. ATP is bound at residue Lys225. The S4 RNA-binding domain maps to 346–410 (VNLVNFLVEN…GKKKILICKV (65 aa)).

Belongs to the class-I aminoacyl-tRNA synthetase family. TyrS type 1 subfamily. As to quaternary structure, homodimer.

It is found in the cytoplasm. It catalyses the reaction tRNA(Tyr) + L-tyrosine + ATP = L-tyrosyl-tRNA(Tyr) + AMP + diphosphate + H(+). Catalyzes the attachment of tyrosine to tRNA(Tyr) in a two-step reaction: tyrosine is first activated by ATP to form Tyr-AMP and then transferred to the acceptor end of tRNA(Tyr). This Mycoplasmopsis synoviae (strain 53) (Mycoplasma synoviae) protein is Tyrosine--tRNA ligase.